Consider the following 467-residue polypeptide: Fumarate hydratase class II (467 aa).

Substrate is bound by residues 98 to 100 (SGT), arginine 126, 129 to 132 (HPND), 139 to 141 (SSN), and threonine 187. Catalysis depends on histidine 188, which acts as the Proton donor/acceptor. Residue serine 318 is part of the active site. Substrate-binding positions include serine 319 and 324–326 (KVN).

Belongs to the class-II fumarase/aspartase family. Fumarase subfamily. As to quaternary structure, homotetramer.

It is found in the cytoplasm. The enzyme catalyses (S)-malate = fumarate + H2O. The protein operates within carbohydrate metabolism; tricarboxylic acid cycle; (S)-malate from fumarate: step 1/1. Functionally, involved in the TCA cycle. Catalyzes the stereospecific interconversion of fumarate to L-malate. This is Fumarate hydratase class II from Salmonella typhimurium (strain LT2 / SGSC1412 / ATCC 700720).